The following is a 792-amino-acid chain: Endonuclease MutS2 (792 aa).

Position 344-351 (G344–T351) interacts with ATP. One can recognise a Smr domain in the interval I716 to E791.

The protein belongs to the DNA mismatch repair MutS family. MutS2 subfamily. As to quaternary structure, homodimer. Binds to stalled ribosomes, contacting rRNA.

Endonuclease that is involved in the suppression of homologous recombination and thus may have a key role in the control of bacterial genetic diversity. In terms of biological role, acts as a ribosome collision sensor, splitting the ribosome into its 2 subunits. Detects stalled/collided 70S ribosomes which it binds and splits by an ATP-hydrolysis driven conformational change. Acts upstream of the ribosome quality control system (RQC), a ribosome-associated complex that mediates the extraction of incompletely synthesized nascent chains from stalled ribosomes and their subsequent degradation. Probably generates substrates for RQC. This is Endonuclease MutS2 from Thermomicrobium roseum (strain ATCC 27502 / DSM 5159 / P-2).